The following is a 1172-amino-acid chain: Thrombospondin-2 (1172 aa).

Residues 1–18 form the signal peptide; that stretch reads MVWRLVLLALWVWPSTQA. The Laminin G-like domain occupies 19–215; sequence GHQDKDTTFD…LQNVHLVFEN (197 aa). The tract at residues 19 to 232 is heparin-binding; the sequence is GHQDKDTTFD…KKGCQQGQGA (214 aa). Residues asparagine 151, asparagine 316, and asparagine 330 are each glycosylated (N-linked (GlcNAc...) asparagine). Positions 318-375 constitute a VWFC domain; sequence SACWQDGRFFAENETWVVDSCTTCTCKKFKTICHQITCPPATCASPSFVEGECCPSCL. 3 TSP type-1 domains span residues 381-431, 437-492, and 494-549; these read EEGW…SKCD, DGGW…APCP, and DGRW…RSCP. 27 disulfide bridges follow: cysteine 393–cysteine 425, cysteine 397–cysteine 430, cysteine 408–cysteine 415, cysteine 449–cysteine 486, cysteine 453–cysteine 491, cysteine 464–cysteine 476, cysteine 506–cysteine 543, cysteine 510–cysteine 548, cysteine 521–cysteine 533, cysteine 553–cysteine 564, cysteine 558–cysteine 574, cysteine 577–cysteine 588, cysteine 594–cysteine 610, cysteine 601–cysteine 619, cysteine 622–cysteine 646, cysteine 652–cysteine 665, cysteine 659–cysteine 678, cysteine 680–cysteine 691, cysteine 707–cysteine 715, cysteine 720–cysteine 740, cysteine 756–cysteine 776, cysteine 779–cysteine 799, cysteine 815–cysteine 835, cysteine 838–cysteine 858, cysteine 876–cysteine 896, cysteine 912–cysteine 932, and cysteine 948–cysteine 1169. N-linked (GlcNAc...) asparagine glycosylation occurs at asparagine 457. The EGF-like 1 domain maps to 549 to 589; sequence PVDGCLSNPCFPGAQCSSFPDGSWSCGSCPVGFLGNGTHCE. A glycan (N-linked (GlcNAc...) asparagine) is linked at asparagine 584. In terms of domain architecture, EGF-like 2 spans 648–692; the sequence is PENPCKDKTHNCHKHAECIYLGHFSDPMYKCECQTGYAGDGLICG. TSP type-3 repeat units lie at residues 693–728, 729–764, 765–787, 788–823, 824–846, 847–884, 885–920, and 921–956; these read EDSDLDGWPNLNLVCATNATYHCIKDNCPHLPNSGQ, EDFDKDGIGDACDDDDDNDGVTDEKDNCQLLFNPRQ, ADYDKDEVGDRCDNCPYVHNPAQ, IDTDNNGEGDACSVDIDGDDVFNERDNCPYVYNTDQ, RDTDGDGVGDHCDNCPLVHNPDQ, TDVDNDLVGDQCDNNEDIDDDGHQNNQDNCPYISNANQ, ADHDRDGQGDACDPDDDNDGVPDDRDNCRLVFNPDQ, and EDLDGDGRGDICKDDFDNDNIPDIDDVCPENNAISE. A glycan (N-linked (GlcNAc...) asparagine) is linked at asparagine 710. Residues 843 to 931 form a disordered region; that stretch reads NPDQTDVDND…DLDGDGRGDI (89 aa). The segment covering 847 to 866 has biased composition (acidic residues); it reads TDVDNDLVGDQCDNNEDIDD. The span at 870–884 shows a compositional bias: polar residues; it reads QNNQDNCPYISNANQ. Acidic residues predominate over residues 896-905; sequence CDPDDDNDGV. The Cell attachment site motif lies at 928-930; it reads RGD. A TSP C-terminal domain is found at 960-1172; that stretch reads RNFQMVPLDP…SDLKYECRDI (213 aa). Asparagine 1069 carries an N-linked (GlcNAc...) asparagine glycan.

This sequence belongs to the thrombospondin family. As to quaternary structure, homotrimer; disulfide-linked. Interacts (via the TSP type I repeats) with CD36; the interaction conveys an antiangiogenic effect. Interacts (via the TSP type I repeats) with HRG; the interaction blocks the antiangiogenic effect of THBS2 with CD36. Can bind to fibrinogen, fibronectin, laminin and type V collagen. In terms of tissue distribution, high expression in invertebral disk tissue.

Its function is as follows. Adhesive glycoprotein that mediates cell-to-cell and cell-to-matrix interactions. Ligand for CD36 mediating antiangiogenic properties. The protein is Thrombospondin-2 (THBS2) of Homo sapiens (Human).